A 481-amino-acid polypeptide reads, in one-letter code: Surface lipoprotein assembly modifier 2 (481 aa).

A signal peptide spans 1–24 (MKNGVKQLFLLSLIGLSLTNVAWA). An N-terminal domain region spans residues 24–192 (AEVARPKNDT…QYLLTLNQRN (169 aa)). Positions 193-481 (QWIWQVGLNF…RIYLEIGKIF (289 aa)) are C-terminal probable beta barrel. A run of 14 beta stranded transmembrane segments spans residues 194 to 204 (WIWQVGLNFLN), 223 to 243 (AWEKESGQGVGYSLSVEKKWP), 248 to 257 (FFSKTMFNGN), 271 to 281 (TVRIGGGLGYQ), 285 to 295 (VEVSLFPFQEK), 315 to 325 (LGIRLENVDWL), 329 to 339 (WQISTALEYGE), 353 to 363 (YFVSSTLFYLP), 368 to 377 (FWFVGMDFHR), 390 to 399 (KTLRLGWGQD), 404 to 414 (ISSRLTFSYAN), 432 to 441 (YTTTITLWHR), 448 to 458 (LTPKLSWDYQK), and 471 to 481 (NRIYLEIGKIF).

It belongs to the Slam family.

Its subcellular location is the cell outer membrane. Its function is as follows. Required for correct export to the cell surface of some cell outer membrane lipoproteins. The sequence is that of Surface lipoprotein assembly modifier 2 from Haemophilus influenzae (strain ATCC 51907 / DSM 11121 / KW20 / Rd).